The chain runs to 484 residues: Malonate-semialdehyde dehydrogenase 1 (484 aa).

NAD(+) is bound by residues phenylalanine 153, lysine 177, glutamate 180, arginine 181, serine 230, and threonine 252. Residue cysteine 285 is the Nucleophile of the active site. Glutamate 385 contributes to the NAD(+) binding site.

The protein belongs to the aldehyde dehydrogenase family. IolA subfamily. In terms of assembly, homotetramer.

The enzyme catalyses 3-oxopropanoate + NAD(+) + CoA + H2O = hydrogencarbonate + acetyl-CoA + NADH + H(+). The catalysed reaction is 2-methyl-3-oxopropanoate + NAD(+) + CoA + H2O = propanoyl-CoA + hydrogencarbonate + NADH + H(+). It participates in polyol metabolism; myo-inositol degradation into acetyl-CoA; acetyl-CoA from myo-inositol: step 7/7. Its function is as follows. Catalyzes the oxidation of malonate semialdehyde (MSA) and methylmalonate semialdehyde (MMSA) into acetyl-CoA and propanoyl-CoA, respectively. Is involved in a myo-inositol catabolic pathway. Bicarbonate, and not CO2, is the end-product of the enzymatic reaction. In Geobacillus thermodenitrificans (strain NG80-2), this protein is Malonate-semialdehyde dehydrogenase 1.